A 633-amino-acid polypeptide reads, in one-letter code: Probable potassium transport system protein Kup (633 aa).

12 consecutive transmembrane segments (helical) span residues 19–39, 61–81, 112–132, 148–168, 179–199, 217–237, 258–278, 290–310, 348–368, 380–400, 405–425, and 430–450; these read LGML…SPLY, ILAL…VLFI, VLVI…MITP, SGLE…LFLI, LFGP…INGI, FFIV…LALT, WFAL…ALLL, LLAP…ATVI, IYIG…VLGF, VAVT…MLLL, PVLA…FFAA, and IFQG…LMTT.

It belongs to the HAK/KUP transporter (TC 2.A.72) family.

It is found in the cell inner membrane. It catalyses the reaction K(+)(in) + H(+)(in) = K(+)(out) + H(+)(out). In terms of biological role, transport of potassium into the cell. Likely operates as a K(+):H(+) symporter. The polypeptide is Probable potassium transport system protein Kup (Pseudomonas fluorescens (strain ATCC BAA-477 / NRRL B-23932 / Pf-5)).